We begin with the raw amino-acid sequence, 379 residues long: Chaperone protein DnaJ (379 aa).

A J domain is found at 5-70 (DYYEVLGVSR…QKRAAYDQYG (66 aa)). The segment at 134 to 212 (GVTKEIRIPT…CHGHGRVEKS (79 aa)) adopts a CR-type zinc-finger fold. Zn(2+) is bound by residues Cys-147, Cys-150, Cys-164, Cys-167, Cys-186, Cys-189, Cys-200, and Cys-203. CXXCXGXG motif repeat units follow at residues 147–154 (CDVCHGSG), 164–171 (CPTCHGAG), 186–193 (CPHCHGRG), and 200–207 (CNKCHGHG).

The protein belongs to the DnaJ family. In terms of assembly, homodimer. Requires Zn(2+) as cofactor.

The protein resides in the cytoplasm. Its function is as follows. Participates actively in the response to hyperosmotic and heat shock by preventing the aggregation of stress-denatured proteins and by disaggregating proteins, also in an autonomous, DnaK-independent fashion. Unfolded proteins bind initially to DnaJ; upon interaction with the DnaJ-bound protein, DnaK hydrolyzes its bound ATP, resulting in the formation of a stable complex. GrpE releases ADP from DnaK; ATP binding to DnaK triggers the release of the substrate protein, thus completing the reaction cycle. Several rounds of ATP-dependent interactions between DnaJ, DnaK and GrpE are required for fully efficient folding. Also involved, together with DnaK and GrpE, in the DNA replication of plasmids through activation of initiation proteins. The sequence is that of Chaperone protein DnaJ from Yersinia pseudotuberculosis serotype O:1b (strain IP 31758).